The following is a 511-amino-acid chain: BAR/IMD domain-containing adapter protein 2-like 1 (511 aa).

Residues 1–249 (MSRGPEEVNR…MNMIEEIKTP (249 aa)) enclose the IMD domain. Positions 115–154 (MNATLKRYQTEHKNKLESLEKSQAELKKIRRKSQGSRNAL) form a coiled coil. Phosphothreonine occurs at positions 248 and 257. Phosphoserine is present on residues Ser261 and Ser281. The segment at 302 to 328 (NNPATAAPNSQRVNNSTGTSEDPSLQR) is disordered. The segment covering 303–328 (NPATAAPNSQRVNNSTGTSEDPSLQR) has biased composition (polar residues). Phosphoserine is present on residues Ser331 and Ser354. Positions 339-402 (MKKQKVKTIF…PSSYTKLLEE (64 aa)) constitute an SH3 domain. Thr412 bears the Phosphothreonine mark. Phosphoserine is present on residues Ser414, Ser420, and Ser422. A disordered region spans residues 451–511 (RRADSARTTS…TNDRSAPIIR (61 aa)). Residues 483-511 (PPFLSGENPFATVKLRPTVTNDRSAPIIR) are binds F-actin.

As to quaternary structure, interacts with RAC1. Binds to F-actin. Interacts with FASLG. Interacts (via SH3 domain) with E.coli effector protein EspF(U) (via PXXP motifs). Identified in a complex containing at least WASL, BAIAP2L1 and E.coli EspF(U). Interacts with E.coli intimin receptor Tir. Phosphorylated on tyrosine in response to insulin.

It is found in the cytoplasm. Its subcellular location is the cytoskeleton. May function as adapter protein. Involved in the formation of clusters of actin bundles. Plays a role in the reorganization of the actin cytoskeleton in response to bacterial infection. This Homo sapiens (Human) protein is BAR/IMD domain-containing adapter protein 2-like 1 (BAIAP2L1).